A 275-amino-acid chain; its full sequence is Formamidopyrimidine-DNA glycosylase (275 aa).

P2 acts as the Schiff-base intermediate with DNA in catalysis. Catalysis depends on E3, which acts as the Proton donor. K58 serves as the catalytic Proton donor; for beta-elimination activity. Positions 89, 108, and 151 each coordinate DNA. The segment at 236 to 275 (KVYDRAGQPCERCPGPAACAGISRTVQSGRATYFCARTQK) adopts an FPG-type; degenerate zinc-finger fold. The active-site Proton donor; for delta-elimination activity is R265.

The protein belongs to the FPG family. As to quaternary structure, monomer. Zn(2+) is required as a cofactor.

The catalysed reaction is Hydrolysis of DNA containing ring-opened 7-methylguanine residues, releasing 2,6-diamino-4-hydroxy-5-(N-methyl)formamidopyrimidine.. The enzyme catalyses 2'-deoxyribonucleotide-(2'-deoxyribose 5'-phosphate)-2'-deoxyribonucleotide-DNA = a 3'-end 2'-deoxyribonucleotide-(2,3-dehydro-2,3-deoxyribose 5'-phosphate)-DNA + a 5'-end 5'-phospho-2'-deoxyribonucleoside-DNA + H(+). Involved in base excision repair of DNA damaged by oxidation or by mutagenic agents. Acts as a DNA glycosylase that recognizes and removes damaged bases. Has a preference for oxidized purines, such as 7,8-dihydro-8-oxoguanine (8-oxoG). Has AP (apurinic/apyrimidinic) lyase activity and introduces nicks in the DNA strand. Cleaves the DNA backbone by beta-delta elimination to generate a single-strand break at the site of the removed base with both 3'- and 5'-phosphates. In Acidiphilium cryptum (strain JF-5), this protein is Formamidopyrimidine-DNA glycosylase.